A 195-amino-acid polypeptide reads, in one-letter code: Large ribosomal subunit protein eL18 (195 aa).

K126 is covalently cross-linked (Glycyl lysine isopeptide (Lys-Gly) (interchain with G-Cter in SUMO2)). S137 is subject to Phosphoserine. The tract at residues 158 to 195 (HFGKAPGTPHSHTKPYVRSKGRKFERARGRRASRGYKN) is disordered. T165 carries the phosphothreonine modification. Composition is skewed to basic residues over residues 168 to 178 (SHTKPYVRSKG) and 185 to 195 (RGRRASRGYKN). Residue K171 forms a Glycyl lysine isopeptide (Lys-Gly) (interchain with G-Cter in SUMO2) linkage.

This sequence belongs to the eukaryotic ribosomal protein eL18 family. In terms of assembly, component of the large ribosomal subunit.

Its subcellular location is the cytoplasm. The protein localises to the cytosol. It is found in the rough endoplasmic reticulum. Functionally, component of the large ribosomal subunit. The sequence is that of Large ribosomal subunit protein eL18 (RPL18) from Sus scrofa (Pig).